A 465-amino-acid polypeptide reads, in one-letter code: Type II restriction enzyme BsuMI component YdjA (465 aa).

As to quaternary structure, bsuMI restriction activity requires YdiR, YdiS and YdjA.

The enzyme catalyses Endonucleolytic cleavage of DNA to give specific double-stranded fragments with terminal 5'-phosphates.. Functionally, a P subtype restriction enzyme that recognizes the double-stranded sequence 5'-CTCGAG-3'; the cleavage site is unknown. This chain is Type II restriction enzyme BsuMI component YdjA (ydjA), found in Bacillus subtilis (strain 168).